Reading from the N-terminus, the 130-residue chain is UPF0251 protein MmarC7_1642 (130 aa).

It belongs to the UPF0251 family.

This chain is UPF0251 protein MmarC7_1642, found in Methanococcus maripaludis (strain C7 / ATCC BAA-1331).